We begin with the raw amino-acid sequence, 68 residues long: MDKVVKFAEPGRAFAKDSIRLVKRCTKPDRKEFQKIAIATAVGFCIMGFIGFFVKLIHIPINNIIVGS.

The Cytoplasmic portion of the chain corresponds to 1-32; the sequence is MDKVVKFAEPGRAFAKDSIRLVKRCTKPDRKE. The helical transmembrane segment at 33–61 threads the bilayer; it reads FQKIAIATAVGFCIMGFIGFFVKLIHIPI. The Extracellular portion of the chain corresponds to 62–68; sequence NNIIVGS.

Belongs to the SecE/SEC61-gamma family. As to quaternary structure, heterotrimeric complex composed of SEC61-alpha, SEC61-beta and SEC61-gamma.

The protein localises to the endoplasmic reticulum membrane. Its function is as follows. Necessary for protein translocation in the endoplasmic reticulum. The chain is Protein transport protein Sec61 gamma-2 subunit (Sec61gamma) from Drosophila melanogaster (Fruit fly).